Consider the following 435-residue polypeptide: Putative F-box/FBD/LRR-repeat protein At5g56810 (435 aa).

The region spanning 14–62 (PDRISQLPNDLLFRILSLIPVSDAMSTSLLSKRWKSVWKMLPTLVYNEN) is the F-box domain. LRR repeat units lie at residues 64-95 (CSNI…TLEL), 146-173 (LKLQ…YLTC), 174-199 (VNFE…FLQR), 222-248 (KEQA…NIFD), 266-291 (SVRV…SLDL), and 316-341 (YDNF…KLNH). One can recognise an FBD domain in the interval 353–404 (CSVSEPSSVPECLSFHLETFQWIGYAGTFEEIAAAVYVLKNARCLKNATISL).

This Arabidopsis thaliana (Mouse-ear cress) protein is Putative F-box/FBD/LRR-repeat protein At5g56810.